The following is a 409-amino-acid chain: POU domain, class 4, transcription factor 2 (409 aa).

A disordered region spans residues 26 to 93 (YSALHSTSPG…SEAMRRACLP (68 aa)). Residues 31-52 (STSPGSSAPIAPSASSPSSSSN) show a composition bias toward low complexity. Residues 53–69 (AGGGGGGGGGGGGGGGR) are compositionally biased toward gly residues. Positions 91-237 (CLPTPPSNIF…MHQAALSMAH (147 aa)) are required for transcriptional activation. The short motif at 110 to 119 (RAEALAAVDI) is the POU-IV box element. The segment covering 153-166 (AASSSSVPISHPSA) has biased composition (low complexity). Residues 153–188 (AASSSSVPISHPSALAGTHHHHHHHHHHHHQPHQAL) are disordered. Residues 170 to 184 (THHHHHHHHHHHHQP) show a composition bias toward basic residues. The short motif at 171 to 185 (HHHHHHHHHHHHQPH) is the Nuclear speckle targeting signal element. Residues 238 to 409 (AHGLPSHMGC…QKRMKYSAGI (172 aa)) form a required for DNA-binding and transcriptional repression region. In terms of domain architecture, POU-specific spans 250–327 (DVDADPRDLE…ILQAWLEEAE (78 aa)). The homeobox DNA-binding region spans 345–404 (KKRKRTSIAAPEKRSLEAYFAIQPRPSSEKIAAIAEKLDLKKNVVRVWFCNQRQKQKRMK).

Belongs to the POU transcription factor family. Class-4 subfamily. In terms of assembly, interacts with POU4F1; this interaction inhibits both POU4F1 DNA-binding and transcriptional activities. Interacts (C-terminus) with ESR1 (via DNA-binding domain); this interaction increases the estrogen receptor ESR1 transcriptional activity in a DNA- and ligand 17-beta-estradiol-independent manner. Interacts (via C-terminus) with TP53 (via N-terminus). Interacts with DLX1 (via homeobox DNA-binding domain); this interaction suppresses DLX1-mediated transcriptional activity in postnatal retina enhancing retinal ganglion cell (RGC) differentiation. Interacts with DLX2 (via homeobox DNA-binding domain); this interaction enhances RGC differentiation. Interacts (via C-terminus) with ISL1 (via C-terminus). Interacts with ISL2. Interacts with LHX2. As to expression, expressed in the brain. Expressed in the ganglion cell layer of the retina.

The protein resides in the nucleus. The protein localises to the nucleus speckle. It is found in the cytoplasm. Functionally, tissue-specific DNA-binding transcription factor involved in the development and differentiation of target cells. Functions either as activator or repressor modulating the rate of target gene transcription through RNA polymerase II enzyme in a promoter-dependent manner. Binds to the consensus octamer motif 5'-AT[A/T]A[T/A]T[A/T]A-3' of promoter of target genes. Plays a fundamental role in the gene regulatory network essential for retinal ganglion cell (RGC) differentiation. Binds to an octamer site to form a ternary complex with ISL1; cooperates positively with ISL1 and ISL2 to potentiate transcriptional activation of RGC target genes being involved in RGC fate commitment in the developing retina and RGC axon formation and pathfinding. Inhibits DLX1 and DLX2 transcriptional activities preventing DLX1- and DLX2-mediated ability to promote amacrine cell fate specification. In cooperation with TP53 potentiates transcriptional activation of BAX promoter activity increasing neuronal cell apoptosis. Negatively regulates BAX promoter activity in the absence of TP53. Acts as a transcriptional coactivator via its interaction with the transcription factor ESR1 by enhancing its effect on estrogen response element (ERE)-containing promoter. Antagonizes the transcriptional stimulatory activity of POU4F1 by preventing its binding to an octamer motif. Involved in TNFSF11-mediated terminal osteoclast differentiation. The chain is POU domain, class 4, transcription factor 2 from Homo sapiens (Human).